Reading from the N-terminus, the 502-residue chain is Hexose transporter 1 (502 aa).

At methionine 1–serine 26 the chain is on the cytoplasmic side. A helical transmembrane segment spans residues leucine 27–leucine 47. The Extracellular segment spans residues asparagine 48 to serine 76. A disulfide bridge connects residues cysteine 61 and cysteine 68. Residues phenylalanine 77 to valine 97 traverse the membrane as a helical segment. Over glutamine 98–arginine 102 the chain is Cytoplasmic. Residues phenylalanine 103–histidine 123 form a helical membrane-spanning segment. Over histidine 124–arginine 132 the chain is Extracellular. Residues leucine 133 to methionine 153 traverse the membrane as a helical segment. Over threonine 154–glycine 163 the chain is Cytoplasmic. A helical membrane pass occupies residues valine 164 to methionine 184. Glutamine 167 provides a ligand contact to alpha-D-glucose. Residue glutamine 167 participates in beta-D-glucose binding. Topologically, residues glycine 185–arginine 205 are extracellular. A helical membrane pass occupies residues leucine 206–tyrosine 226. The Cytoplasmic portion of the chain corresponds to lysine 227–asparagine 291. A helical transmembrane segment spans residues valine 292–valine 312. Alpha-D-glucose-binding residues include glutamine 303, glutamine 304, and asparagine 309. Glutamine 303 is a binding site for beta-D-glucose. A beta-D-glucose-binding site is contributed by asparagine 309. The Extracellular segment spans residues serine 313 to threonine 329. A helical transmembrane segment spans residues threonine 330 to valine 350. Residue asparagine 339 participates in beta-D-glucose binding. Topologically, residues glutamate 351–lysine 356 are cytoplasmic. The helical transmembrane segment at threonine 357 to asparagine 377 threads the bilayer. The Extracellular portion of the chain corresponds to glutamine 378–serine 390. The chain crosses the membrane as a helical span at residues isoleucine 391–isoleucine 411. Position 410 (tryptophan 410) interacts with alpha-D-glucose. Residues tyrosine 412–serine 427 lie on the Cytoplasmic side of the membrane. Residues leucine 428 to isoleucine 448 traverse the membrane as a helical segment. At lysine 449 to threonine 453 the chain is on the extracellular side. The helical transmembrane segment at isoleucine 454–isoleucine 474 threads the bilayer. At lysine 475–valine 502 the chain is on the cytoplasmic side.

Belongs to the major facilitator superfamily. Sugar transporter (TC 2.A.1.1) family. As to quaternary structure, homodimer.

It is found in the cell membrane. It catalyses the reaction D-glucose(out) = D-glucose(in). It carries out the reaction D-fructose(out) = D-fructose(in). The enzyme catalyses D-galactose(in) = D-galactose(out). The catalysed reaction is D-mannose(out) = D-mannose(in). It catalyses the reaction D-glucosamine(out) = D-glucosamine(in). It carries out the reaction D-xylose(out) = D-xylose(in). With respect to regulation, inhibited by compound 3361 (3-O-((undec-10-en)-1-yl)-D-glucose). Sodium-independent facilitative hexose transporter. Can transport D-glucose and D-fructose. Can transport D-mannose, D-galactose, D-xylose and D-glucosamine. The protein is Hexose transporter 1 of Plasmodium vivax (strain Brazil I).